A 329-amino-acid polypeptide reads, in one-letter code: uncharacterized protein (329 aa).

The next 7 helical transmembrane spans lie at 29 to 49 (IVLW…AISH), 78 to 98 (VLVA…CWMG), 120 to 140 (KKWL…SLLV), 164 to 184 (WMIG…LIYL), 217 to 237 (YFFL…LLVI), 260 to 280 (FFWT…SFIV), and 299 to 319 (GSSL…LLFI).

It to M.pneumoniae MPN_129.

The protein localises to the cell membrane. This is an uncharacterized protein from Mycoplasma pneumoniae (strain ATCC 29342 / M129 / Subtype 1) (Mycoplasmoides pneumoniae).